Consider the following 90-residue polypeptide: Early nodulin-36A (90 aa).

This Glycine max (Soybean) protein is Early nodulin-36A.